We begin with the raw amino-acid sequence, 354 residues long: MKFGNICFSYQPPGETHKLSNGSLCSAWYRLRRVGFDTYWTLEHHFTEFGLTGNLFVAAANLLGRTKTLNVGTMGVVIPTAHPVRQLEDVLLLDQMSKGRFNFGTVRGLYHKDFRVFGVDMEESRAITQNFYQMIMESLQTGTISSDSDYIQFPKVDVYPKVYSKNVPTCMTAESASTTEWLAIQGLPMVLSWIIGTNEKKAQMELYNEIATEYGHDISKIDHCMTYICSVDDDAQKAQDVCREFLKNWYDSYVNATNIFNDSNQTRGYDYHKGQWRDFVLQGHTNTNRRVDYSNGINPVGTPEQCIEIIQRDIDATGITNITCGFEANGTEDEIIASMRRFMTQVAPFLKEPK.

Belongs to the bacterial luciferase oxidoreductase family. In terms of assembly, heterodimer of an alpha and a beta chain.

The enzyme catalyses a long-chain fatty aldehyde + FMNH2 + O2 = a long-chain fatty acid + hnu + FMN + H2O + 2 H(+). Its function is as follows. Light-emitting reaction in luminous bacteria. In Aliivibrio fischeri (Vibrio fischeri), this protein is Alkanal monooxygenase alpha chain (luxA).